A 721-amino-acid polypeptide reads, in one-letter code: K(+)-insensitive pyrophosphate-energized proton pump (721 aa).

The next 5 helical transmembrane spans lie at 8–28 (LLGV…AVWV), 57–77 (YRTL…AIDM), 82–102 (FGLT…AGYL), 136–156 (VMGL…YLVF), and 168–188 (LVAL…GGGI). Lysine 191 is a substrate binding site. Mg(2+) contacts are provided by aspartate 194, aspartate 198, asparagine 221, and aspartate 224. Transmembrane regions (helical) follow at residues 247 to 267 (AIFL…IILF), 294 to 314 (ISLA…IGAF), 323 to 343 (ALAL…IVKI), 374 to 394 (YGVG…VLGI), and 416 to 436 (AGIF…GIII). Position 446 (aspartate 446) interacts with Mg(2+). 4 helical membrane-spanning segments follow: residues 483-503 (AIAS…FEIV), 527-547 (LINA…YFFS), 599-619 (FLIP…LLGW), and 621-641 (ALAG…LLMA). Positions 648, 672, and 676 each coordinate Ca(2+). Position 679 (lysine 679) interacts with substrate. A helical membrane pass occupies residues 698 to 718 (VVFTYVIVSTNIALGIWPSGL).

Belongs to the H(+)-translocating pyrophosphatase (TC 3.A.10) family. K(+)-insensitive subfamily. In terms of assembly, homodimer. It depends on Mg(2+) as a cofactor.

The protein resides in the cell membrane. The enzyme catalyses diphosphate + H2O + H(+)(in) = 2 phosphate + 2 H(+)(out). Functionally, proton pump that utilizes the energy of pyrophosphate hydrolysis as the driving force for proton movement across the membrane. Generates a proton motive force. The polypeptide is K(+)-insensitive pyrophosphate-energized proton pump (Pyrobaculum aerophilum (strain ATCC 51768 / DSM 7523 / JCM 9630 / CIP 104966 / NBRC 100827 / IM2)).